A 150-amino-acid chain; its full sequence is Large ribosomal subunit protein bL9 (150 aa).

It belongs to the bacterial ribosomal protein bL9 family.

Binds to the 23S rRNA. The chain is Large ribosomal subunit protein bL9 from Shewanella baltica (strain OS223).